Here is a 218-residue protein sequence, read N- to C-terminus: Protein N-lysine methyltransferase METTL21A (218 aa).

Residues tryptophan 47, glycine 73–glycine 75, aspartate 94, tryptophan 125, and alanine 143 each bind S-adenosyl-L-methionine.

This sequence belongs to the methyltransferase superfamily. METTL21 family. As to quaternary structure, interacts with heat shock 70 family members; at least some of these proteins are methylation substrates.

The protein resides in the cytoplasm. It carries out the reaction L-lysyl-[protein] + 3 S-adenosyl-L-methionine = N(6),N(6),N(6)-trimethyl-L-lysyl-[protein] + 3 S-adenosyl-L-homocysteine + 3 H(+). Its function is as follows. Protein-lysine methyltransferase that selectively trimethylates residues in heat shock protein 70 (HSP70) family members. Contributes to the in vivo trimethylation of Lys residues in HSPA1 and HSPA8. In vitro methylates 'Lys-561' in HSPA1, 'Lys-564' in HSPA2, 'Lys-585' in HSPA5, 'Lys-563' in HSPA6 and 'Lys-561' in HSPA8. The polypeptide is Protein N-lysine methyltransferase METTL21A (Mettl21A) (Mus musculus (Mouse)).